A 140-amino-acid chain; its full sequence is Large ribosomal subunit protein uL11 (140 aa).

Belongs to the universal ribosomal protein uL11 family. In terms of assembly, part of the ribosomal stalk of the 50S ribosomal subunit. Interacts with L10 and the large rRNA to form the base of the stalk. L10 forms an elongated spine to which L12 dimers bind in a sequential fashion forming a multimeric L10(L12)X complex. One or more lysine residues are methylated.

In terms of biological role, forms part of the ribosomal stalk which helps the ribosome interact with GTP-bound translation factors. This is Large ribosomal subunit protein uL11 from Brachyspira hyodysenteriae (strain ATCC 49526 / WA1).